Here is a 681-residue protein sequence, read N- to C-terminus: DNA ligase (681 aa).

Residues 35-39 (DAEYD), 84-85 (SI), and Glu-121 each bind NAD(+). The active-site N6-AMP-lysine intermediate is the Lys-123. Residues Arg-144, Glu-180, Lys-300, and Lys-324 each coordinate NAD(+). Residues Cys-418, Cys-421, Cys-436, and Cys-442 each coordinate Zn(2+). The region spanning 601–681 (AADGPASGKT…GLRRLLEQPA (81 aa)) is the BRCT domain.

It belongs to the NAD-dependent DNA ligase family. LigA subfamily. Mg(2+) serves as cofactor. Mn(2+) is required as a cofactor.

The catalysed reaction is NAD(+) + (deoxyribonucleotide)n-3'-hydroxyl + 5'-phospho-(deoxyribonucleotide)m = (deoxyribonucleotide)n+m + AMP + beta-nicotinamide D-nucleotide.. Functionally, DNA ligase that catalyzes the formation of phosphodiester linkages between 5'-phosphoryl and 3'-hydroxyl groups in double-stranded DNA using NAD as a coenzyme and as the energy source for the reaction. It is essential for DNA replication and repair of damaged DNA. This chain is DNA ligase, found in Aromatoleum aromaticum (strain DSM 19018 / LMG 30748 / EbN1) (Azoarcus sp. (strain EbN1)).